Consider the following 238-residue polypeptide: Thymidine kinase a (238 aa).

Residues 38-45, 70-72, and 115-118 each bind ATP; these read GPMFSGKS, DTR, and DEAQ. Catalysis depends on glutamate 116, which acts as the Proton acceptor. Tyrosine 147 lines the substrate pocket. Zn(2+) is bound by residues cysteine 172 and cysteine 175. Substrate-binding positions include 191–195 and tyrosine 200; that span reads TELIG. A Zn(2+)-binding site is contributed by cysteine 204.

Belongs to the thymidine kinase family. In terms of assembly, monomer and dimer. Dimerization is stimulated by ATP. Expressed ubiquitously.

It localises to the cytoplasm. It carries out the reaction thymidine + ATP = dTMP + ADP + H(+). Its pathway is purine metabolism. The protein operates within pyrimidine metabolism. Its function is as follows. Part of the salvage pathway for purine and pyrimidine deoxyribonucleotide synthesis. Phosphorylates preferentially purines over pyrimidines. Mediates tolerance to genotoxins, such as ultraviolet-C (UV-C) irradiation, MMC, a DNA crosslinker, and ZEO, a DNA intercalator, that induce double-strand breaks and thus contributes to several DNA repair pathways by providing deoxythymidine triphosphate that serve as precursors for DNA repair and to balance deoxyribonucleotides pools. The protein is Thymidine kinase a of Arabidopsis thaliana (Mouse-ear cress).